Here is a 237-residue protein sequence, read N- to C-terminus: Lectin alpha chain (237 aa).

Glu8 and Asp10 together coordinate Mn(2+). Positions 10, 12, 14, and 19 each coordinate Ca(2+). Residue Tyr12 coordinates a carbohydrate. Mn(2+)-binding residues include Asp19 and His24. A carbohydrate is bound at residue 99 to 100 (LY). Asp208 is a Ca(2+) binding site. A carbohydrate is bound at residue Arg228.

It belongs to the leguminous lectin family. In terms of assembly, homotetramer. Post-translationally, the beta and gamma chains are produced by partial proteolytic processing of the lectin alpha chain by an asparaginyl endopeptidase.

It localises to the vacuole. The protein resides in the aleurone grain. D-mannose/D-glucose-binding lectin with hemagglutinating activity towards rabbit and human erythrocytes. In rats, elicits an acute inflammatory response by inducing neutrophil migration and induces dose-dependent paw edema. This Macropsychanthus wilsonii (Wilson's clusterpea) protein is Lectin alpha chain.